Here is a 213-residue protein sequence, read N- to C-terminus: MAETYDFLFKFLVIGSAGTGKSCLLHQFIENKFKQDSNHTIGVEFGSRVVNVGGKTVKLQIWDTAGQERFRSVTRSYYRGAAGALLVYDITSRETYNSLAAWLTDARTLASPNIVVILCGNKKDLDPEREVTFLEASRFAQENELMFLETSALTGENVEEAFLKCARTILNKIDSGELDPERMGSGIQYGDISLRQLRQPRSAQAVAPQPCGC.

Residue A2 is modified to N-acetylalanine. GDP-binding residues include G18, T19, G20, K21, S22, and C23. Residues G18, T19, G20, K21, S22, C23, S37, H39, and T40 each contribute to the GTP site. S22 lines the Mg(2+) pocket. The short motif at 39-44 (HTIGVE) is the Switch 1 element. Positions 40 and 63 each coordinate Mg(2+). The short motif at 65-74 (AGQERFRSVT) is the Switch 2 element. Position 66 (G66) interacts with GTP. Q67 is modified (5-glutamyl serotonin). N121, K122, D124, A152, and L153 together coordinate GDP. The GTP site is built by N121, K122, D124, A152, and L153. Phosphoserine occurs at positions 185 and 193. S-geranylgeranyl cysteine attachment occurs at residues C211 and C213. Position 213 is a cysteine methyl ester (C213).

This sequence belongs to the small GTPase superfamily. Rab family. In terms of assembly, interacts (GTP-bound form) with RUFY1; the interaction allows endosomal tethering and fusion. Requires Mg(2+) as cofactor. Serotonylation of Gln-67 by TGM2 during activation and aggregation of platelets leads to constitutive activation of GTPase activity.

The protein localises to the cell membrane. The protein resides in the early endosome membrane. It carries out the reaction GTP + H2O = GDP + phosphate + H(+). Regulated by guanine nucleotide exchange factors (GEFs) which promote the exchange of bound GDP for free GTP. Regulated by GTPase activating proteins (GAPs) which increase the GTP hydrolysis activity. Inhibited by GDP dissociation inhibitors (GDIs). In terms of biological role, the small GTPases Rab are key regulators of intracellular membrane trafficking, from the formation of transport vesicles to their fusion with membranes. Rabs cycle between an inactive GDP-bound form and an active GTP-bound form that is able to recruit to membranes different set of downstream effectors directly responsible for vesicle formation, movement, tethering and fusion. RAB4B mediates endosomal tethering and fusion through the interaction with RUFY1 and RAB14. Acts as a regulator of platelet alpha-granule release during activation and aggregation of platelets. The chain is Ras-related protein Rab-4B from Mus musculus (Mouse).